A 778-amino-acid chain; its full sequence is Dynein axonemal intermediate chain 4 (778 aa).

WD repeat units follow at residues 477-517 (HCES…QTPI), 526-573 (LHTS…ECVD), 586-629 (RHIS…QYLE), 633-673 (AHKR…PVMG), 676-715 (SGQR…LDPT), and 721-760 (SPGV…AGGG).

In terms of assembly, part of the multisubunit axonemal dynein complex formed at least of two heavy chains and a number of intermediate and light chains.

It is found in the cytoplasm. The protein localises to the cytoskeleton. It localises to the flagellum axoneme. The protein resides in the cilium axoneme. Its subcellular location is the dynein axonemal particle. Its function is as follows. Plays a critical role in the assembly of axonemal dynein complex. Plays a key role in ciliary motility. In Danio rerio (Zebrafish), this protein is Dynein axonemal intermediate chain 4.